We begin with the raw amino-acid sequence, 496 residues long: Cytochrome f, chloroplastic (496 aa).

The transit peptide at 1 to 149 (MASLQTPVMV…VGAAAGSANA (149 aa)) directs the protein to the chloroplast. 4 residues coordinate heme: tyrosine 150, cysteine 170, cysteine 173, and histidine 174. The helical transmembrane segment at 462–481 (VQAFLFFSFTVLATQTLLVV) threads the bilayer.

This sequence belongs to the cytochrome f family. In terms of assembly, interacts with plastocyanin and Rieske iron-sulfur protein. Heme is required as a cofactor.

Its subcellular location is the plastid. The protein resides in the chloroplast thylakoid membrane. In terms of biological role, translocates protons across the thylakoid membrane and transfers electrons from photosystem II to photosystem I. It receives electrons from the Rieske iron-sulfur protein and passes them to plastocyanin. The protein is Cytochrome f, chloroplastic (petA) of Euglena gracilis.